A 237-amino-acid polypeptide reads, in one-letter code: Small ribosomal subunit protein uS3 (237 aa).

The 69-residue stretch at 39–107 folds into the KH type-2 domain; that stretch reads VRQFLTKELK…PAQINISEVR (69 aa).

It belongs to the universal ribosomal protein uS3 family. Part of the 30S ribosomal subunit. Forms a tight complex with proteins S10 and S14.

In terms of biological role, binds the lower part of the 30S subunit head. Binds mRNA in the 70S ribosome, positioning it for translation. This is Small ribosomal subunit protein uS3 from Aeromonas hydrophila subsp. hydrophila (strain ATCC 7966 / DSM 30187 / BCRC 13018 / CCUG 14551 / JCM 1027 / KCTC 2358 / NCIMB 9240 / NCTC 8049).